A 732-amino-acid polypeptide reads, in one-letter code: LRRQKRDWVIPPIKVPENERGPFPKNLVQIKSNRDREAKIFYSITGQGADAPPEGIFTIEKETGWMKVTQPLDREHINKYHLYSHAVSENGKPVEEPMEIIVTVTDQNDNKPQFTQEVFRGSVPEGALPGTSVMRVNATDADDDVETYNGVIAYSILSQEPREPHPHMFTVNRATGTLSVIASGLDRERVREYTLTMQAADLDGQGLTTTALAVIEITDVNDNAPEFDPKTYEAAVPENEAELEVARLATTDLDEPHTPAWRAVYSIVRGNEGGAFTITTDPASNEGVLRTAKGLDYEAKRQFVLHVAVVNEAPFAIKLPTATATVMVSVEDVNEAPVFDPPLRLAQVPEDVPLGQPLASYTAQDPDRAQQQRIKYVMGSDPAGWLAVHPENGLITAREQLDRESPFTKNSTYMAVLLAVDDGLPPATGTGTLLLTLLDVNDHGPEPEPRDIVICNRSPVPQVLTITDRDLPPNTGPFRAELSHGSGDSWAVEVGNGGDTVALWLTEPLEQNLYSVYLRLFDRQGKDQVTVIRAQVCDCQGRVESCAQKPRVDTGVPIVLAVLGAVLALLLVLLLLLLLVRRRKVVKEPLLLPEDDTRDNIFYYGEEGGGEEDQDYDLSQLHRGLDARPEVIRNDVAPPLMAAPQYRPRPANPDEIGNFIDENLKAADTDPTAPPYDSLLVFDYEGGGSEATSLSSLNSSASDQDQDYDYLNEWGNRFKKLAELYGGGEDEE.

Positions 1 to 6 (LRRQKR) are excised as a propeptide. Cadherin domains follow at residues 6 to 114 (RDWV…KPQF), 115 to 227 (TQEV…APEF), 228 to 339 (DPKT…APVF), 340 to 443 (DPPL…VNDH), and 444 to 554 (GPEP…RVDT). Topologically, residues 6-554 (RDWVIPPIKV…SCAQKPRVDT (549 aa)) are extracellular. Residue Asn137 is glycosylated (N-linked (GlcNAc...) asparagine). N-linked (GlcNAc...) asparagine glycosylation occurs at Asn410. The helical transmembrane segment at 555–580 (GVPIVLAVLGAVLALLLVLLLLLLLV) threads the bilayer. Residues 581–732 (RRRKVVKEPL…ELYGGGEDEE (152 aa)) lie on the Cytoplasmic side of the membrane.

Expressed in a wide variety of tissues.

It localises to the cell membrane. In terms of biological role, cadherins are calcium-dependent cell adhesion proteins. They preferentially interact with themselves in a homophilic manner in connecting cells; cadherins may thus contribute to the sorting of heterogeneous cell types. B-cadherin may have important functions in neurogenesis, in at least some epithelia, and in embryogenesis. This chain is B-cadherin (K-CAM), found in Gallus gallus (Chicken).